A 297-amino-acid polypeptide reads, in one-letter code: Acetylglutamate kinase (297 aa).

Substrate is bound by residues 68–69 (GG), Arg90, and Asn195.

Belongs to the acetylglutamate kinase family. ArgB subfamily.

It localises to the cytoplasm. The catalysed reaction is N-acetyl-L-glutamate + ATP = N-acetyl-L-glutamyl 5-phosphate + ADP. It functions in the pathway amino-acid biosynthesis; L-arginine biosynthesis; N(2)-acetyl-L-ornithine from L-glutamate: step 2/4. Functionally, catalyzes the ATP-dependent phosphorylation of N-acetyl-L-glutamate. The protein is Acetylglutamate kinase of Mesorhizobium japonicum (strain LMG 29417 / CECT 9101 / MAFF 303099) (Mesorhizobium loti (strain MAFF 303099)).